The following is a 397-amino-acid chain: Na(+)/H(+) antiporter NhaA 2 (397 aa).

11 helical membrane-spanning segments follow: residues 9–29, 59–79, 95–115, 125–145, 154–174, 177–197, 222–242, 260–280, 292–312, 332–352, and 371–391; these read LHNP…AMAV, LLLW…GLEL, ILPV…YTLI, GWAI…ALLG, LFLL…IAFF, SELS…LILM, SGVH…LKGE, VVGL…SLQG, LGIA…FVWL, GVAL…SLAF, and LGIL…LRFS.

It belongs to the NhaA Na(+)/H(+) (TC 2.A.33) antiporter family.

The protein resides in the cell inner membrane. It carries out the reaction Na(+)(in) + 2 H(+)(out) = Na(+)(out) + 2 H(+)(in). Na(+)/H(+) antiporter that extrudes sodium in exchange for external protons. This chain is Na(+)/H(+) antiporter NhaA 2, found in Magnetococcus marinus (strain ATCC BAA-1437 / JCM 17883 / MC-1).